We begin with the raw amino-acid sequence, 182 residues long: Ferritin heavy chain (182 aa).

Met-1 carries the post-translational modification N-acetylmethionine. Thr-2 is subject to N-acetylthreonine; in Ferritin heavy chain, N-terminally processed. A Ferritin-like diiron domain is found at Gln-11–Gly-160. Glu-28, Glu-63, His-66, Glu-108, and Gln-142 together coordinate Fe cation.

This sequence belongs to the ferritin family. Oligomer of 24 subunits. There are two types of subunits: L (light) chain and H (heavy) chain. The major chain can be light or heavy, depending on the species and tissue type. The functional molecule forms a roughly spherical shell with a diameter of 12 nm and contains a central cavity into which the insoluble mineral iron core is deposited. Interacts with NCOA4; NCOA4 promotes targeting of the iron-binding ferritin complex to autolysosomes following starvation or iron depletion.

It localises to the cytoplasm. It is found in the lysosome. The protein resides in the cytoplasmic vesicle. Its subcellular location is the autophagosome. It catalyses the reaction 4 Fe(2+) + O2 + 4 H(+) = 4 Fe(3+) + 2 H2O. Stores iron in a soluble, non-toxic, readily available form. Important for iron homeostasis. Has ferroxidase activity. Iron is taken up in the ferrous form and deposited as ferric hydroxides after oxidation. Also plays a role in delivery of iron to cells. Mediates iron uptake in capsule cells of the developing kidney. Delivery to lysosomes is mediated by the cargo receptor NCOA4 for autophagic degradation and release of iron. The chain is Ferritin heavy chain (Fth1) from Rattus norvegicus (Rat).